A 135-amino-acid chain; its full sequence is uncharacterized protein (135 aa).

A run of 3 helical transmembrane segments spans residues Ala13–Leu35, Val82–Ile101, and Ile108–Leu130.

It localises to the cell membrane. This is an uncharacterized protein from Archaeoglobus fulgidus (strain ATCC 49558 / DSM 4304 / JCM 9628 / NBRC 100126 / VC-16).